Consider the following 197-residue polypeptide: Holliday junction branch migration complex subunit RuvA (197 aa).

The domain I stretch occupies residues 1–63 (MFEYLNGKLV…EDAHSLYGFV (63 aa)). Positions 64–142 (NEAEKALFLR…ATGTVGISLL (79 aa)) are domain II. Residues 142–146 (LDAGP) form a flexible linker region. The interval 147–197 (AGNLALEEAIEALQALGYKATELKKIEKKLAQETGLTSEEYIKSALKLMMK) is domain III.

The protein belongs to the RuvA family. As to quaternary structure, homotetramer. Forms an RuvA(8)-RuvB(12)-Holliday junction (HJ) complex. HJ DNA is sandwiched between 2 RuvA tetramers; dsDNA enters through RuvA and exits via RuvB. An RuvB hexamer assembles on each DNA strand where it exits the tetramer. Each RuvB hexamer is contacted by two RuvA subunits (via domain III) on 2 adjacent RuvB subunits; this complex drives branch migration. In the full resolvosome a probable DNA-RuvA(4)-RuvB(12)-RuvC(2) complex forms which resolves the HJ.

Its subcellular location is the cytoplasm. The RuvA-RuvB-RuvC complex processes Holliday junction (HJ) DNA during genetic recombination and DNA repair, while the RuvA-RuvB complex plays an important role in the rescue of blocked DNA replication forks via replication fork reversal (RFR). RuvA specifically binds to HJ cruciform DNA, conferring on it an open structure. The RuvB hexamer acts as an ATP-dependent pump, pulling dsDNA into and through the RuvAB complex. HJ branch migration allows RuvC to scan DNA until it finds its consensus sequence, where it cleaves and resolves the cruciform DNA. The chain is Holliday junction branch migration complex subunit RuvA from Lactococcus lactis subsp. lactis (strain IL1403) (Streptococcus lactis).